The sequence spans 96 residues: Co-chaperonin GroES (96 aa).

The protein belongs to the GroES chaperonin family. As to quaternary structure, heptamer of 7 subunits arranged in a ring. Interacts with the chaperonin GroEL.

The protein resides in the cytoplasm. Functionally, together with the chaperonin GroEL, plays an essential role in assisting protein folding. The GroEL-GroES system forms a nano-cage that allows encapsulation of the non-native substrate proteins and provides a physical environment optimized to promote and accelerate protein folding. GroES binds to the apical surface of the GroEL ring, thereby capping the opening of the GroEL channel. In Halorhodospira halophila (strain DSM 244 / SL1) (Ectothiorhodospira halophila (strain DSM 244 / SL1)), this protein is Co-chaperonin GroES.